The chain runs to 224 residues: UPF0758 protein Neut_0782 (224 aa).

One can recognise an MPN domain in the interval 102 to 224 (IMDSPQSVRS…TVSFAERGLI (123 aa)). Residues His173, His175, and Asp186 each contribute to the Zn(2+) site. Positions 173–186 (HNHPSGVAEPSRAD) match the JAMM motif motif.

It belongs to the UPF0758 family.

The protein is UPF0758 protein Neut_0782 of Nitrosomonas eutropha (strain DSM 101675 / C91 / Nm57).